Consider the following 254-residue polypeptide: 4-hydroxy-tetrahydrodipicolinate reductase (254 aa).

Residue Gly-8–Met-13 coordinates NAD(+). Lys-36 is a binding site for NADP(+). Residues Gly-89 to Thr-91 and Ser-115 to Tyr-118 each bind NAD(+). His-147 acts as the Proton donor/acceptor in catalysis. His-148 lines the (S)-2,3,4,5-tetrahydrodipicolinate pocket. Residue Lys-151 is the Proton donor of the active site. Gly-157–Thr-158 is a (S)-2,3,4,5-tetrahydrodipicolinate binding site.

This sequence belongs to the DapB family.

It is found in the cytoplasm. The catalysed reaction is (S)-2,3,4,5-tetrahydrodipicolinate + NAD(+) + H2O = (2S,4S)-4-hydroxy-2,3,4,5-tetrahydrodipicolinate + NADH + H(+). The enzyme catalyses (S)-2,3,4,5-tetrahydrodipicolinate + NADP(+) + H2O = (2S,4S)-4-hydroxy-2,3,4,5-tetrahydrodipicolinate + NADPH + H(+). The protein operates within amino-acid biosynthesis; L-lysine biosynthesis via DAP pathway; (S)-tetrahydrodipicolinate from L-aspartate: step 4/4. Its function is as follows. Catalyzes the conversion of 4-hydroxy-tetrahydrodipicolinate (HTPA) to tetrahydrodipicolinate. In Methanospirillum hungatei JF-1 (strain ATCC 27890 / DSM 864 / NBRC 100397 / JF-1), this protein is 4-hydroxy-tetrahydrodipicolinate reductase.